The chain runs to 320 residues: Undecaprenyl-diphosphatase (320 aa).

A run of 8 helical transmembrane segments spans residues 9–29, 82–102, 130–150, 161–181, 191–211, 236–256, 265–285, and 296–316; these read FVLV…LEVF, GVAF…WYFW, LGII…KKLI, LGAI…GEKL, LTMQ…IPGV, FLLG…DVFA, LPLI…IAGL, and VFIW…SAGI.

It belongs to the UppP family.

It is found in the cell inner membrane. It catalyses the reaction di-trans,octa-cis-undecaprenyl diphosphate + H2O = di-trans,octa-cis-undecaprenyl phosphate + phosphate + H(+). In terms of biological role, catalyzes the dephosphorylation of undecaprenyl diphosphate (UPP). Confers resistance to bacitracin. The protein is Undecaprenyl-diphosphatase of Trichormus variabilis (strain ATCC 29413 / PCC 7937) (Anabaena variabilis).